The primary structure comprises 312 residues: MRIAFLGTPAFAVAALDALDRAGHALVAVVAQPDRPAGRGQALREPATKAWARAHGVAVLQPEKVRDGTLAAALRALAPDALVVAAYGRILGKDLLTLAPHGAINVHGSLLPRWRGAAPIQWAVAEGERETGVTIMQMDEGLDTGDILLQRALELREDDTSETLAPRLAALGGEALAEALRLLEAGAIVPVRQDPAQATLARILEKEDGRVAWESPARRVADRLRGFTPWPGAFTTLEGRTLKVLEARPAADLAAPAGEPGEAEVVAGRGLAVACGGGTALLVTRVQLEGRPAQSALDLANGLRRKRFRLGT.

Position 109 to 112 (109 to 112 (SLLP)) interacts with (6S)-5,6,7,8-tetrahydrofolate.

It belongs to the Fmt family.

The catalysed reaction is L-methionyl-tRNA(fMet) + (6R)-10-formyltetrahydrofolate = N-formyl-L-methionyl-tRNA(fMet) + (6S)-5,6,7,8-tetrahydrofolate + H(+). In terms of biological role, attaches a formyl group to the free amino group of methionyl-tRNA(fMet). The formyl group appears to play a dual role in the initiator identity of N-formylmethionyl-tRNA by promoting its recognition by IF2 and preventing the misappropriation of this tRNA by the elongation apparatus. This is Methionyl-tRNA formyltransferase from Anaeromyxobacter dehalogenans (strain 2CP-C).